A 160-amino-acid polypeptide reads, in one-letter code: Transcriptional repressor NrdR (160 aa).

A zinc finger lies at 3–34; sequence CPFCGHADTQVVDSRVSEEGDTIRRRRRCLSC. Residues 49 to 139 enclose the ATP-cone domain; that stretch reads PTVVKRDGSR…VYKSFEDIGE (91 aa).

It belongs to the NrdR family. It depends on Zn(2+) as a cofactor.

Functionally, negatively regulates transcription of bacterial ribonucleotide reductase nrd genes and operons by binding to NrdR-boxes. The polypeptide is Transcriptional repressor NrdR (Bordetella avium (strain 197N)).